We begin with the raw amino-acid sequence, 134 residues long: Complexin-1 (134 aa).

Disordered stretches follow at residues 1–60 and 74–114; these read MEFV…AERE and KKEE…EEDE. A compositionally biased stretch (basic and acidic residues) spans 15 to 60; it reads DMGKMLGGDEEKDPDAAKKEEERQEALRQAEEERKAKYAKMEAERE. A coiled-coil region spans residues 29-64; sequence DAAKKEEERQEALRQAEEERKAKYAKMEAEREVMRQ. The interaction with the SNARE complex stretch occupies residues 48 to 70; the sequence is RKAKYAKMEAEREVMRQGIRDKY.

It belongs to the complexin/synaphin family. As to quaternary structure, binds to the SNARE core complex containing SNAP25, VAMP2 and STX1A. Nervous system, and pancreatic islet cells. Present in many brain regions, including hippocampus and cerebellum. In the retina, present at conventional amacrine cell synapses (at protein level).

Its subcellular location is the cytoplasm. The protein resides in the cytosol. It is found in the perikaryon. It localises to the presynapse. Functionally, positively regulates a late step in exocytosis of various cytoplasmic vesicles, such as synaptic vesicles and other secretory vesicles. Organizes the SNAREs into a cross-linked zigzag topology that, when interposed between the vesicle and plasma membranes, is incompatible with fusion, thereby preventing SNAREs from releasing neurotransmitters until an action potential arrives at the synapse. Also involved in glucose-induced secretion of insulin by pancreatic beta-cells. Essential for motor behavior. The sequence is that of Complexin-1 (Cplx1) from Mus musculus (Mouse).